The following is a 152-amino-acid chain: S-ribosylhomocysteine lyase (152 aa).

Residues histidine 53, histidine 57, and cysteine 120 each coordinate Fe cation.

This sequence belongs to the LuxS family. As to quaternary structure, homodimer. Fe cation serves as cofactor.

It catalyses the reaction S-(5-deoxy-D-ribos-5-yl)-L-homocysteine = (S)-4,5-dihydroxypentane-2,3-dione + L-homocysteine. Its function is as follows. Involved in the synthesis of autoinducer 2 (AI-2) which is secreted by bacteria and is used to communicate both the cell density and the metabolic potential of the environment. The regulation of gene expression in response to changes in cell density is called quorum sensing. Catalyzes the transformation of S-ribosylhomocysteine (RHC) to homocysteine (HC) and 4,5-dihydroxy-2,3-pentadione (DPD). The chain is S-ribosylhomocysteine lyase from Enterococcus faecalis (strain ATCC 700802 / V583).